The sequence spans 359 residues: Fructose-bisphosphate aldolase (359 aa).

T11 is subject to Phosphothreonine. K27 participates in a covalent cross-link: Glycyl lysine isopeptide (Lys-Gly) (interchain with G-Cter in ubiquitin). Phosphoserine is present on residues S56 and S63. S63 contacts D-glyceraldehyde 3-phosphate. K73 participates in a covalent cross-link: Glycyl lysine isopeptide (Lys-Gly) (interchain with G-Cter in ubiquitin). Phosphoserine is present on residues S76 and S83. K85 participates in a covalent cross-link: Glycyl lysine isopeptide (Lys-Gly) (interchain with G-Cter in ubiquitin). A Phosphoserine modification is found at S96. The active-site Proton donor is the D110. 2 residues coordinate Zn(2+): H111 and D145. S147 bears the Phosphoserine mark. A Phosphothreonine modification is found at T150. E175 is a Zn(2+) binding site. Position 179 is a phosphothreonine (T179). Zn(2+) is bound at residue H227. Dihydroxyacetone phosphate is bound at residue G228. H265 contacts Zn(2+). Dihydroxyacetone phosphate is bound by residues 266-268 (GGS) and 287-290 (NLDT). S268 carries the post-translational modification Phosphoserine. A Phosphothreonine modification is found at T290. K308 is covalently cross-linked (Glycyl lysine isopeptide (Lys-Gly) (interchain with G-Cter in ubiquitin)). Y310 is subject to Phosphotyrosine. The residue at position 313 (S313) is a Phosphoserine.

This sequence belongs to the class II fructose-bisphosphate aldolase family. As to quaternary structure, homodimer. It depends on Zn(2+) as a cofactor.

It catalyses the reaction beta-D-fructose 1,6-bisphosphate = D-glyceraldehyde 3-phosphate + dihydroxyacetone phosphate. Its pathway is carbohydrate degradation; glycolysis; D-glyceraldehyde 3-phosphate and glycerone phosphate from D-glucose: step 4/4. Functionally, catalyzes the aldol condensation of dihydroxyacetone phosphate (DHAP or glycerone-phosphate) with glyceraldehyde 3-phosphate (G3P) to form fructose 1,6-bisphosphate (FBP) in gluconeogenesis and the reverse reaction in glycolysis. The sequence is that of Fructose-bisphosphate aldolase (FBA1) from Saccharomyces cerevisiae (strain ATCC 204508 / S288c) (Baker's yeast).